A 380-amino-acid polypeptide reads, in one-letter code: 3-dehydroquinate synthase (380 aa).

NAD(+) contacts are provided by residues 100 to 104 (GAASD), 124 to 125 (TT), K137, and K146. Residues E179, H251, and H267 each coordinate Zn(2+).

The protein belongs to the sugar phosphate cyclases superfamily. Dehydroquinate synthase family. The cofactor is NAD(+). Co(2+) is required as a cofactor. It depends on Zn(2+) as a cofactor.

It is found in the cytoplasm. It carries out the reaction 7-phospho-2-dehydro-3-deoxy-D-arabino-heptonate = 3-dehydroquinate + phosphate. It participates in metabolic intermediate biosynthesis; chorismate biosynthesis; chorismate from D-erythrose 4-phosphate and phosphoenolpyruvate: step 2/7. Functionally, catalyzes the conversion of 3-deoxy-D-arabino-heptulosonate 7-phosphate (DAHP) to dehydroquinate (DHQ). The polypeptide is 3-dehydroquinate synthase (Tropheryma whipplei (strain TW08/27) (Whipple's bacillus)).